The primary structure comprises 491 residues: Neuronal acetylcholine receptor subunit beta-2 (491 aa).

A signal peptide spans 1-18 (MALLRVLCLLAALRRSLC). At 19 to 226 (TDTEERLVEY…ITYDFIIRRK (208 aa)) the chain is on the extracellular side. 2 N-linked (GlcNAc...) asparagine glycosylation sites follow: Asn-44 and Asn-161. An intrachain disulfide couples Cys-148 to Cys-162. A helical transmembrane segment spans residues 227-251 (PLFYTINLIIPCILITSLAILVFYL). Topologically, residues 252–258 (PSDCGEK) are cytoplasmic. Residues 259–277 (MTLCISVLLALTVFLLLIS) form a helical membrane-spanning segment. Over 278 to 292 (KIVPPTSLDVPLVGK) the chain is Extracellular. Residues 293–314 (YLMFTMVLVTFSIVTSVCVLNV) form a helical membrane-spanning segment. Topologically, residues 315-449 (HHRSPTTHTM…WKYVAMVIDR (135 aa)) are cytoplasmic. A helical transmembrane segment spans residues 450-468 (LFLWIFVFVCVFGTVGMFL).

This sequence belongs to the ligand-gated ion channel (TC 1.A.9) family. Acetylcholine receptor (TC 1.A.9.1) subfamily. Beta-2/CHRNB2 sub-subfamily. As to quaternary structure, neuronal AChR is a heteropentamer composed of two different types of subunits: alpha and beta. CHRNB2/Beta-2 subunit can be combined to CHRNA2/alpha-2, CHRNA3/alpha-3 or CHRNA4/alpha-4, CHRNA5/alpha-5, CHRNA6/alpha-6 and CHRNB3/beta-3 to give rise to functional receptors.

The protein localises to the synaptic cell membrane. Its subcellular location is the cell membrane. The enzyme catalyses Ca(2+)(in) = Ca(2+)(out). It carries out the reaction K(+)(in) = K(+)(out). It catalyses the reaction Na(+)(in) = Na(+)(out). With respect to regulation, activated by a myriad of ligands such as acetylcholine, cytisine, nicotine, choline and epibatidine. nAChR activity is inhibited by the antagonist alpha-conotoxins BuIA, PnIA, PnIC, GID and MII, small disulfide-constrained peptides from cone snails. Its function is as follows. Component of neuronal acetylcholine receptors (nAChRs) that function as pentameric, ligand-gated cation channels with high calcium permeability among other activities. nAChRs are excitatory neurotrasnmitter receptors formed by a collection of nAChR subunits known to mediate synaptic transmission in the nervous system and the neuromuscular junction. Each nAchR subunit confers differential attributes to channel properties, including activation, deactivation and desensitization kinetics, pH sensitivity, cation permeability, and binding to allosteric modulators. CHRNB2 forms heteropentameric neuronal acetylcholine receptors with CHRNA2, CHRNA3, CHRNA4 and CHRNA6, as well as CHRNA5 and CHRNB3 as accesory subunits. This Gallus gallus (Chicken) protein is Neuronal acetylcholine receptor subunit beta-2 (CHRNB2).